The sequence spans 606 residues: Ubiquitin-like modifier-activating enzyme ATG7 (606 aa).

A GXGXXG motif motif is present at residues G316–G321. C488 acts as the Glycyl thioester intermediate in catalysis. Residues A567–G606 form a homodimerization region.

It belongs to the ATG7 family. Homodimer. Interacts with ATG8 through a thioester bond between Cys-488 and the C-terminal Gly of ATG8 and with ATG12 through a thioester bond between Cys-488 and the C-terminal Gly of ATG12. Also interacts with ATG3.

The protein resides in the cytoplasm. It localises to the preautophagosomal structure. Its function is as follows. E1-like activating enzyme involved in the 2 ubiquitin-like systems required for cytoplasm to vacuole transport (Cvt) and autophagy. Activates ATG12 for its conjugation with ATG5 and ATG8 for its conjugation with phosphatidylethanolamine. Both systems are needed for the ATG8 association to Cvt vesicles and autophagosomes membranes. Autophagy is essential for maintenance of amino acid levels and protein synthesis under nitrogen starvation. Required for selective autophagic degradation of the nucleus (nucleophagy) as well as for mitophagy which contributes to regulate mitochondrial quantity and quality by eliminating the mitochondria to a basal level to fulfill cellular energy requirements and preventing excess ROS production. The polypeptide is Ubiquitin-like modifier-activating enzyme ATG7 (Kluyveromyces marxianus (strain DMKU3-1042 / BCC 29191 / NBRC 104275) (Yeast)).